Consider the following 471-residue polypeptide: UTP--glucose-1-phosphate uridylyltransferase (471 aa).

UTP-binding positions include 87-90 (LNGG), Lys-101, Gln-164, and Gly-193. 89-90 (GG) provides a ligand contact to substrate. Substrate-binding positions include His-194 and 222-224 (NSD). UTP-binding residues include Asp-224 and Lys-362.

This sequence belongs to the UDPGP type 1 family.

It is found in the cytoplasm. The enzyme catalyses alpha-D-glucose 1-phosphate + UTP + H(+) = UDP-alpha-D-glucose + diphosphate. Functionally, plays a central role as a glucosyl donor in cellular metabolic pathways. The polypeptide is UTP--glucose-1-phosphate uridylyltransferase (UGP) (Astragalus penduliflorus (Mountain lentil)).